The chain runs to 165 residues: Large ribosomal subunit protein uL10 (165 aa).

Belongs to the universal ribosomal protein uL10 family. Part of the ribosomal stalk of the 50S ribosomal subunit. The N-terminus interacts with L11 and the large rRNA to form the base of the stalk. The C-terminus forms an elongated spine to which L12 dimers bind in a sequential fashion forming a multimeric L10(L12)X complex.

In terms of biological role, forms part of the ribosomal stalk, playing a central role in the interaction of the ribosome with GTP-bound translation factors. The sequence is that of Large ribosomal subunit protein uL10 from Mycoplasmopsis synoviae (strain 53) (Mycoplasma synoviae).